The following is a 176-amino-acid chain: Ribosome rescue factor SmrB (176 aa).

The region spanning 98–173 is the Smr domain; the sequence is LDVHGLNQDQ…RSTAILFLIH (76 aa).

It belongs to the SmrB family. Associates with collided ribosomes, but not with correctly translating polysomes.

Functionally, acts as a ribosome collision sensor. Detects stalled/collided disomes (pairs of ribosomes where the leading ribosome is stalled and a second ribosome has collided with it) and endonucleolytically cleaves mRNA at the 5' boundary of the stalled ribosome. Stalled/collided disomes form a new interface (primarily via the 30S subunits) that binds SmrB. Cleaved mRNA becomes available for tmRNA ligation, leading to ribosomal subunit dissociation and rescue of stalled ribosomes. This Buchnera aphidicola subsp. Baizongia pistaciae (strain Bp) protein is Ribosome rescue factor SmrB.